The chain runs to 250 residues: tRNA (guanine-N(1)-)-methyltransferase (250 aa).

S-adenosyl-L-methionine contacts are provided by residues Gly113 and 133–138; that span reads IGDYVL.

It belongs to the RNA methyltransferase TrmD family. Homodimer.

Its subcellular location is the cytoplasm. It catalyses the reaction guanosine(37) in tRNA + S-adenosyl-L-methionine = N(1)-methylguanosine(37) in tRNA + S-adenosyl-L-homocysteine + H(+). Functionally, specifically methylates guanosine-37 in various tRNAs. This is tRNA (guanine-N(1)-)-methyltransferase from Shewanella amazonensis (strain ATCC BAA-1098 / SB2B).